Consider the following 153-residue polypeptide: Hemoglobin-3 (153 aa).

An N-acetylserine modification is found at serine 2. A Globin domain is found at 4–150 (GLTGPQKAAL…ICRVQGDFMK (147 aa)). Histidine 99 is a binding site for heme b.

Belongs to the globin family. Homotetramer.

The protein resides in the cytoplasm. This is Hemoglobin-3 from Phacoides pectinatus (Thick lucine).